The primary structure comprises 172 residues: Fimbrial-like protein FimF (172 aa).

The first 21 residues, 1–21 (MILRRVFIAIGCVLFSPLSQA), serve as a signal peptide directing secretion. The cysteines at positions 41 and 81 are disulfide-linked.

The protein belongs to the fimbrial protein family.

It is found in the fimbrium. The sequence is that of Fimbrial-like protein FimF (fimF) from Salmonella typhimurium (strain LT2 / SGSC1412 / ATCC 700720).